A 470-amino-acid chain; its full sequence is Uronate isomerase (470 aa).

It belongs to the metallo-dependent hydrolases superfamily. Uronate isomerase family.

The enzyme catalyses D-glucuronate = D-fructuronate. The catalysed reaction is aldehydo-D-galacturonate = keto-D-tagaturonate. It participates in carbohydrate metabolism; pentose and glucuronate interconversion. The sequence is that of Uronate isomerase from Cutibacterium acnes (strain DSM 16379 / KPA171202) (Propionibacterium acnes).